The sequence spans 48 residues: Small, acid-soluble spore protein N (48 aa).

Residues 1–48 (MGINKKDGQPQYAPSHLGTKPVKYKRNKGEKFHDKSNGHPIVMQTKGE) form a disordered region. Over residues 27–37 (NKGEKFHDKSN) the composition is skewed to basic and acidic residues.

It belongs to the SspN family.

It is found in the spore core. The protein is Small, acid-soluble spore protein N of Bacillus velezensis (strain DSM 23117 / BGSC 10A6 / LMG 26770 / FZB42) (Bacillus amyloliquefaciens subsp. plantarum).